The sequence spans 457 residues: Argininosuccinate lyase (457 aa).

Belongs to the lyase 1 family. Argininosuccinate lyase subfamily.

It is found in the cytoplasm. It catalyses the reaction 2-(N(omega)-L-arginino)succinate = fumarate + L-arginine. It participates in amino-acid biosynthesis; L-arginine biosynthesis; L-arginine from L-ornithine and carbamoyl phosphate: step 3/3. The protein is Argininosuccinate lyase of Staphylococcus carnosus (strain TM300).